A 602-amino-acid polypeptide reads, in one-letter code: Threonine--tRNA ligase (602 aa).

Residues 208–499 (DHRKLGTELK…LTEHCAGEFP (292 aa)) are catalytic. Residues C300, H351, and H476 each contribute to the Zn(2+) site.

This sequence belongs to the class-II aminoacyl-tRNA synthetase family. Homodimer. The cofactor is Zn(2+).

It localises to the cytoplasm. It carries out the reaction tRNA(Thr) + L-threonine + ATP = L-threonyl-tRNA(Thr) + AMP + diphosphate + H(+). Functionally, catalyzes the attachment of threonine to tRNA(Thr) in a two-step reaction: L-threonine is first activated by ATP to form Thr-AMP and then transferred to the acceptor end of tRNA(Thr). Also edits incorrectly charged L-seryl-tRNA(Thr). In Campylobacter jejuni subsp. jejuni serotype O:6 (strain 81116 / NCTC 11828), this protein is Threonine--tRNA ligase.